A 152-amino-acid chain; its full sequence is Ribosome maturation factor RimP (152 aa).

The protein belongs to the RimP family.

The protein localises to the cytoplasm. Its function is as follows. Required for maturation of 30S ribosomal subunits. The sequence is that of Ribosome maturation factor RimP from Citrobacter koseri (strain ATCC BAA-895 / CDC 4225-83 / SGSC4696).